The chain runs to 325 residues: NADH-quinone oxidoreductase subunit H (325 aa).

8 helical membrane-spanning segments follow: residues 5 to 25 (LIIILIKSAVVILLLFTAAAY), 75 to 95 (FVYWLAPGISLFTALFIFVLI), 117 to 137 (VGVVFLLAFSSLAVYGVVLAG), 157 to 177 (ISYEIPMGLSLLTVVLSTGTL), 190 to 210 (WLIWTNPISFIIYFITSFAET), 240 to 260 (FFLGEYINILAVSAIATTLFF), 268 to 288 (DIPILWFGLKVAIFVFIFMWV), and 305 to 325 (WKVLIPIAILNLIITAYFTLV).

It belongs to the complex I subunit 1 family. As to quaternary structure, NDH-1 is composed of 14 different subunits. Subunits NuoA, H, J, K, L, M, N constitute the membrane sector of the complex.

The protein localises to the cell inner membrane. It catalyses the reaction a quinone + NADH + 5 H(+)(in) = a quinol + NAD(+) + 4 H(+)(out). Its function is as follows. NDH-1 shuttles electrons from NADH, via FMN and iron-sulfur (Fe-S) centers, to quinones in the respiratory chain. The immediate electron acceptor for the enzyme in this species is believed to be ubiquinone. Couples the redox reaction to proton translocation (for every two electrons transferred, four hydrogen ions are translocated across the cytoplasmic membrane), and thus conserves the redox energy in a proton gradient. This subunit may bind ubiquinone. This is NADH-quinone oxidoreductase subunit H from Protochlamydia amoebophila (strain UWE25).